Consider the following 586-residue polypeptide: MATCWQALWAYRSYLIVLCLPIFLLPLPLIVQTKEAYCAYSIILMALLWCTEALPLAVTALFPIILFPLMGIMEASKVCLEYFKDTNILFVGGLMVAIAVEHWNLHKRIALGVLLIIGVRPALLLLGFMLVTAFLSMWISNTATTAMMLPIGYAVLEQLQGSQKDVEEGNSNPSFELQEASPQKEETKLDNGQAVSVSSEPRAQKTKEHHRFSQGLSLCICYSASIGGIATLTGTTPNLVLQGQVNSIFPENSNVVNFASWFGFAFPTMVILLLLAWLWLQVLFLGVNFRKNFGFGEGEEERKQAAFQVIKTQHRLLGPMSFAEKAVTFLFVLLVVLWFTREPGFFPGWGDTAFANKKGQSMVSDGTVAIFISLIMFIIPSKIPGLTEDPKKPGKLKAPPAILTWKTVNDKMPWNILILLGGGFALAKGSEESGLSKWLGDKLTPLQHVPPSATVLILSLLVAIFTECTSNVATTTLFLPILASMAQAICLHPLYVMLPCTLAASLAFMLPVATPPNAIVFSFGGLKVSDMARAGFLLNIIGVLTITLSINSWSIPIFKLDTFPTWAYSNTSQCLLNPPNSTVPGH.

The next 3 membrane-spanning stretches (helical) occupy residues 13–33 (SYLIVLCLPIFLLPLPLIVQT), 53–73 (ALPLAVTALFPIILFPLMGIM), and 86–106 (TNILFVGGLMVAIAVEHWNLH). Positions 165 to 175 (DVEEGNSNPSF) are enriched in polar residues. The disordered stretch occupies residues 165–209 (DVEEGNSNPSFELQEASPQKEETKLDNGQAVSVSSEPRAQKTKEH). Transmembrane regions (helical) follow at residues 215-235 (GLSLCICYSASIGGIATLTGT), 264-284 (FAFPTMVILLLLAWLWLQVLF), 319-339 (PMSFAEKAVTFLFVLLVVLWF), 366-386 (GTVAIFISLIMFIIPSKIPGL), 407-427 (TVNDKMPWNILILLGGGFALA), 445-465 (PLQHVPPSATVLILSLLVAIF), 478-498 (FLPILASMAQAICLHPLYVML), 506-526 (LAFMLPVATPPNAIVFSFGGL), and 535-555 (GFLLNIIGVLTITLSINSWSI).

The protein belongs to the SLC13A/DASS transporter (TC 2.A.47) family. NADC subfamily. Highly expressed in kidney and small intestine. Not detectable in brain, heart, stomach and skeletal muscle.

It localises to the apical cell membrane. The enzyme catalyses succinate(out) + 3 Na(+)(out) = succinate(in) + 3 Na(+)(in). It carries out the reaction fumarate(out) + 3 Na(+)(out) = fumarate(in) + 3 Na(+)(in). It catalyses the reaction 2-oxoglutarate(out) + 3 Na(+)(out) = 2-oxoglutarate(in) + 3 Na(+)(in). Li(+) decreases succinate transport in the presence of Na(+), by competing at one of the three cation binding sites. In terms of biological role, low-affinity sodium-dicarboxylate cotransporter, that mediates the entry of citric acid cycle intermediates, such as succinate, citrate, fumarate and alpha-ketoglutarate (2-oxoglutarate) into the small intestine and renal proximal tubule. Can transport citrate in a Na(+)-dependent manner, recognizing the divalent form of citrate rather than the trivalent form which is normally found in blood. Transports the dicarboxylate into the cell with a probable stoichiometry of 3 Na(+) for 1 divalent dicarboxylate, rendering the process electrogenic. Has a critical role in renal dicarboxylate transport. The sequence is that of Solute carrier family 13 member 2 (Slc13a2) from Mus musculus (Mouse).